The primary structure comprises 214 residues: MTEKFPDLPDLQPETLRVSGLSLSRGDITLVRDFSLDLAPGQAMLMSGPNGTGKTTLLRAVAGFVRPDAGRVVFGEGPKADSASELVAWLGHADGLKPVETPRQSLRFWAKMNDQGRDPILPLMRAMAIESLIDRPASRLSRGQQRRCALVRVALANRPIWLLDEPAGPLDGGGRARLAALVDWHRSRGGSVIAATHQSLDWPDAKRIDLGAHR.

The ABC transporter domain maps to 16-212 (LRVSGLSLSR…PDAKRIDLGA (197 aa)). 48-55 (GPNGTGKT) lines the ATP pocket.

Belongs to the ABC transporter superfamily. CcmA exporter (TC 3.A.1.107) family. In terms of assembly, the complex is composed of two ATP-binding proteins (CcmA) and two transmembrane proteins (CcmB).

It localises to the cell inner membrane. It carries out the reaction heme b(in) + ATP + H2O = heme b(out) + ADP + phosphate + H(+). Functionally, part of the ABC transporter complex CcmAB involved in the biogenesis of c-type cytochromes; once thought to export heme, this seems not to be the case, but its exact role is uncertain. Responsible for energy coupling to the transport system. This Maricaulis maris (strain MCS10) (Caulobacter maris) protein is Cytochrome c biogenesis ATP-binding export protein CcmA.